The primary structure comprises 250 residues: 3-deoxy-manno-octulosonate cytidylyltransferase (250 aa).

It belongs to the KdsB family.

It is found in the cytoplasm. The catalysed reaction is 3-deoxy-alpha-D-manno-oct-2-ulosonate + CTP = CMP-3-deoxy-beta-D-manno-octulosonate + diphosphate. The protein operates within nucleotide-sugar biosynthesis; CMP-3-deoxy-D-manno-octulosonate biosynthesis; CMP-3-deoxy-D-manno-octulosonate from 3-deoxy-D-manno-octulosonate and CTP: step 1/1. Its pathway is bacterial outer membrane biogenesis; lipopolysaccharide biosynthesis. Functionally, activates KDO (a required 8-carbon sugar) for incorporation into bacterial lipopolysaccharide in Gram-negative bacteria. The sequence is that of 3-deoxy-manno-octulosonate cytidylyltransferase from Rhodopirellula baltica (strain DSM 10527 / NCIMB 13988 / SH1).